Here is a 467-residue protein sequence, read N- to C-terminus: Flagellum-specific ATP synthase (467 aa).

ATP is bound at residue 180–187 (AGSGVGKS).

Belongs to the ATPase alpha/beta chains family.

It localises to the cytoplasm. It carries out the reaction ATP + H2O + 4 H(+)(in) = ADP + phosphate + 5 H(+)(out). Functionally, probable catalytic subunit of a protein translocase for flagellum-specific export, or a proton translocase involved in local circuits at the flagellum. The polypeptide is Flagellum-specific ATP synthase (fliI) (Rhizobium meliloti (strain 1021) (Ensifer meliloti)).